The sequence spans 275 residues: NH(3)-dependent NAD(+) synthetase (275 aa).

46 to 53 contributes to the ATP binding site; that stretch reads GISGGQDS. Mg(2+) is bound at residue Asp-52. Arg-140 is a binding site for deamido-NAD(+). An ATP-binding site is contributed by Thr-160. Glu-165 is a Mg(2+) binding site. 2 residues coordinate deamido-NAD(+): Lys-173 and Asp-180. ATP-binding residues include Lys-189 and Thr-211. 260–261 serves as a coordination point for deamido-NAD(+); it reads HK.

This sequence belongs to the NAD synthetase family. As to quaternary structure, homodimer.

It catalyses the reaction deamido-NAD(+) + NH4(+) + ATP = AMP + diphosphate + NAD(+) + H(+). Its pathway is cofactor biosynthesis; NAD(+) biosynthesis; NAD(+) from deamido-NAD(+) (ammonia route): step 1/1. Catalyzes the ATP-dependent amidation of deamido-NAD to form NAD. Uses ammonia as a nitrogen source. The chain is NH(3)-dependent NAD(+) synthetase from Salmonella arizonae (strain ATCC BAA-731 / CDC346-86 / RSK2980).